The primary structure comprises 185 residues: Monothiol glutaredoxin-S4, mitochondrial (185 aa).

Residues 1–36 (MARLMSSALIRGLVRSSCSPTVAAVAQPTIHQFRNY) constitute a mitochondrion transit peptide. The disordered stretch occupies residues 37–74 (SSGLGGDSTATGDSSSTRVAADPDTHQDFQPTTKSSNM). A compositionally biased stretch (low complexity) spans 43 to 53 (DSTATGDSSST). Over residues 64–74 (DFQPTTKSSNM) the composition is skewed to polar residues. Residues 77-179 (DDIVSQDIKE…DVLGDIAQKR (103 aa)) form the Glutaredoxin domain. Residue Lys-94 coordinates glutathione. Cys-102 serves as a coordination point for [2Fe-2S] cluster. Residues Lys-131, Phe-143, and 156 to 157 (SD) each bind glutathione.

This sequence belongs to the glutaredoxin family. CGFS subfamily.

It is found in the mitochondrion. In terms of biological role, may only reduce GSH-thiol disulfides, but not protein disulfides. The chain is Monothiol glutaredoxin-S4, mitochondrial (GRXS4) from Oryza sativa subsp. japonica (Rice).